A 267-amino-acid polypeptide reads, in one-letter code: MVKIAVCGAAGRMGGRIIAAVKEAEGVEICGALERPGHPMVGQDAGYNAGLGAIGVAISDDLNAVVQACDVLIDFTAPKVSLKNLEVCALYGKSIVIGSTGFTPEERALAAELAREIPVIIAPNMSVGVNVCFKVLADVAKILGEDFDVEIVESHHRLKKDSPSGTAVRMGEVVASALGRDYNKVANYHREGICGERTHDEIGMQTVRGGDIVGEHTVYFIGMGERIEITHRAHTRDMFSRGSVRAAKWVVTAKPGVYDMQDVLGLR.

NAD(+)-binding positions include 8 to 13 (GAAGRM) and Glu34. NADP(+) is bound at residue Arg35. NAD(+) is bound by residues 98–100 (GST) and 122–125 (APNM). The active-site Proton donor/acceptor is His155. A (S)-2,3,4,5-tetrahydrodipicolinate-binding site is contributed by His156. Lys159 serves as the catalytic Proton donor. (S)-2,3,4,5-tetrahydrodipicolinate is bound at residue 165-166 (GT).

This sequence belongs to the DapB family.

Its subcellular location is the cytoplasm. The catalysed reaction is (S)-2,3,4,5-tetrahydrodipicolinate + NAD(+) + H2O = (2S,4S)-4-hydroxy-2,3,4,5-tetrahydrodipicolinate + NADH + H(+). It catalyses the reaction (S)-2,3,4,5-tetrahydrodipicolinate + NADP(+) + H2O = (2S,4S)-4-hydroxy-2,3,4,5-tetrahydrodipicolinate + NADPH + H(+). Its pathway is amino-acid biosynthesis; L-lysine biosynthesis via DAP pathway; (S)-tetrahydrodipicolinate from L-aspartate: step 4/4. In terms of biological role, catalyzes the conversion of 4-hydroxy-tetrahydrodipicolinate (HTPA) to tetrahydrodipicolinate. This chain is 4-hydroxy-tetrahydrodipicolinate reductase, found in Citrifermentans bemidjiense (strain ATCC BAA-1014 / DSM 16622 / JCM 12645 / Bem) (Geobacter bemidjiensis).